The sequence spans 476 residues: Bifunctional protein HldE (476 aa).

The segment at 1 to 318 (MKVTLPDFRR…ENAIRGRAET (318 aa)) is ribokinase. An ATP-binding site is contributed by 195–198 (NLSE). Asp-264 is an active-site residue. Residues 344–476 (MTNGIFDILH…IIQSIKNGRG (133 aa)) are cytidylyltransferase.

The protein in the N-terminal section; belongs to the carbohydrate kinase PfkB family. This sequence in the C-terminal section; belongs to the cytidylyltransferase family. Homodimer.

The catalysed reaction is D-glycero-beta-D-manno-heptose 7-phosphate + ATP = D-glycero-beta-D-manno-heptose 1,7-bisphosphate + ADP + H(+). It catalyses the reaction D-glycero-beta-D-manno-heptose 1-phosphate + ATP + H(+) = ADP-D-glycero-beta-D-manno-heptose + diphosphate. It functions in the pathway nucleotide-sugar biosynthesis; ADP-L-glycero-beta-D-manno-heptose biosynthesis; ADP-L-glycero-beta-D-manno-heptose from D-glycero-beta-D-manno-heptose 7-phosphate: step 1/4. Its pathway is nucleotide-sugar biosynthesis; ADP-L-glycero-beta-D-manno-heptose biosynthesis; ADP-L-glycero-beta-D-manno-heptose from D-glycero-beta-D-manno-heptose 7-phosphate: step 3/4. Catalyzes the phosphorylation of D-glycero-D-manno-heptose 7-phosphate at the C-1 position to selectively form D-glycero-beta-D-manno-heptose-1,7-bisphosphate. In terms of biological role, catalyzes the ADP transfer from ATP to D-glycero-beta-D-manno-heptose 1-phosphate, yielding ADP-D-glycero-beta-D-manno-heptose. The sequence is that of Bifunctional protein HldE from Yersinia pestis bv. Antiqua (strain Antiqua).